The following is a 598-amino-acid chain: Ceramide transfer protein (598 aa).

The span at 1–11 (MSDNQSWNSSG) shows a compositional bias: polar residues. The interval 1-24 (MSDNQSWNSSGSEEDPETESGPPV) is disordered. Residues 23-117 (PVERCGVLSK…WIDAIEQHKT (95 aa)) form the PH domain. Serine 126 is subject to Phosphoserine. Serine 132 carries the phosphoserine; by PKD modification. At serine 135 the chain carries Phosphoserine. The tract at residues 202–221 (DDEDDFPTTRSDGDFLHNTN) is disordered. The stretch at 268-301 (KREESWQKRHDKEMEKRRRLEEAYKNAMAELKKK) forms a coiled coil. Serine 315 carries the phosphoserine modification. The short motif at 321–327 (EFFDAVE) is the FFAT element. The region spanning 363-592 (GTHRFVQKVE…FTSYVQEKTA (230 aa)) is the START domain. The an N-acylsphing-4-enine site is built by glutamate 446, glutamine 467, asparagine 504, and tyrosine 553.

In terms of assembly, interacts with VAPA and VAPB. Interaction with VAPB is less efficient than with VAPA. Interacts (via FFAT motif) with the MOSPD2 (via MSP domain). Post-translationally, phosphorylation on Ser-132 decreases the affinity toward phosphatidylinositol 4-phosphate at Golgi membranes and reduces ceramide transfer activity. Inactivated by hyperphosphorylation of serine residues by CSNK1G2/CK1 that triggers dissociation from the Golgi complex, thus down-regulating ER-to-Golgi transport of ceramide and sphingomyelin synthesis.

It is found in the cytoplasm. It localises to the golgi apparatus. The protein localises to the endoplasmic reticulum. The enzyme catalyses N-hexadecanoylsphing-4-enine(in) = N-hexadecanoylsphing-4-enine(out). Shelters ceramides and diacylglycerol lipids inside its START domain and mediates the intracellular trafficking of ceramides and diacylglycerol lipids in a non-vesicular manner. This chain is Ceramide transfer protein (CERT1), found in Cricetulus griseus (Chinese hamster).